A 176-amino-acid polypeptide reads, in one-letter code: NAD(P)H-quinone oxidoreductase subunit 6, chloroplastic (176 aa).

5 helical membrane-spanning segments follow: residues 10-30, 32-52, 61-81, 92-112, and 152-172; these read FLLVFLGSGLILGGLGVVLLP, PIYSAFSLGLVLVCTSLFYIL, AQLLIYVGAINVLIIFAVMFM, LWTVGDGITSMVCISLFISLI, and FFLPFELISIILLDALIGAIA.

Belongs to the complex I subunit 6 family. In terms of assembly, NDH is composed of at least 16 different subunits, 5 of which are encoded in the nucleus.

It is found in the plastid. The protein localises to the chloroplast thylakoid membrane. The catalysed reaction is a plastoquinone + NADH + (n+1) H(+)(in) = a plastoquinol + NAD(+) + n H(+)(out). The enzyme catalyses a plastoquinone + NADPH + (n+1) H(+)(in) = a plastoquinol + NADP(+) + n H(+)(out). In terms of biological role, NDH shuttles electrons from NAD(P)H:plastoquinone, via FMN and iron-sulfur (Fe-S) centers, to quinones in the photosynthetic chain and possibly in a chloroplast respiratory chain. The immediate electron acceptor for the enzyme in this species is believed to be plastoquinone. Couples the redox reaction to proton translocation, and thus conserves the redox energy in a proton gradient. The protein is NAD(P)H-quinone oxidoreductase subunit 6, chloroplastic (ndhG) of Atropa belladonna (Belladonna).